A 459-amino-acid polypeptide reads, in one-letter code: D(1)-like dopamine receptor (459 aa).

Over 1-23 (MAQNFSTVGDGKQMLLERDSSKR) the chain is Extracellular. The N-linked (GlcNAc...) asparagine glycan is linked to Asn-4. A helical transmembrane segment spans residues 24-49 (VLTGCFLSLLIFTTLLGNTLVCVAVT). Residues 50-60 (KFRHLRSKVTN) are Cytoplasmic-facing. A helical membrane pass occupies residues 61 to 87 (FFVISLAISDLLVAILVMPWKAATEIM). At 88 to 96 (GFWPFGEFC) the chain is on the extracellular side. Cys-96 and Cys-187 are oxidised to a cystine. Residues 97-119 (NIWVAFDIMCSTASILNLCVISV) traverse the membrane as a helical segment. At 120–138 (DRYWAISSPFRYERKMTPK) the chain is on the cytoplasmic side. The chain crosses the membrane as a helical span at residues 139–164 (VACLMISVAWTLSVLISFIPVQLNWH). Topologically, residues 165 to 191 (KAQTASYVELNGTYAGDLPPDNCDSSL) are extracellular. A helical transmembrane segment spans residues 192–216 (NRTYAISSSLISFYIPVAIMIVTYT). The Cytoplasmic segment spans residues 217–269 (RIYRIAQKQIRRISALERAAESAQNRHSSMGNSLSMESECSFKMSFKRETKVL). Residues 270-297 (KTLSVIMGVFVCCWLPFFILNCMVPFCE) traverse the membrane as a helical segment. Topologically, residues 298–311 (ADDTTDFPCISSTT) are extracellular. The chain crosses the membrane as a helical span at residues 312 to 333 (FDVFVWFGWANSSLNPIIYAFN). At 334–459 (ADFRKAFSIL…QNGQHKSMSC (126 aa)) the chain is on the cytoplasmic side.

The protein belongs to the G-protein coupled receptor 1 family.

Its subcellular location is the cell membrane. The protein resides in the cell projection. The protein localises to the cilium membrane. Its function is as follows. Receptor for dopamine. This chain is D(1)-like dopamine receptor (d14), found in Takifugu rubripes (Japanese pufferfish).